The following is a 917-amino-acid chain: ABC transporter A family member 12 (917 aa).

A run of 6 helical transmembrane segments spans residues 34–54 (LILVPLFLCLILLAIQQVLDA), 323–343 (IASLLGPLFFTWVVLLLFPVI), 377–397 (FLTISMLYVISLVGFGSAIGL), 409–429 (FVFYFIYSNLQISLAFLVSSI), 435–455 (TVTVIAYILVYGTGLLGSFLF), and 508–528 (GEVFCIMSVEWFLALIVAYYI). An ABC transporter domain is found at 595–832 (ILCDNLKKVY…YGGSYVFTMT (238 aa)). An ATP-binding site is contributed by 633-640 (GPNGAGKT).

The protein belongs to the ABC transporter superfamily. ABCA family. CPR flippase (TC 3.A.1.211) subfamily.

The protein resides in the membrane. In Arabidopsis thaliana (Mouse-ear cress), this protein is ABC transporter A family member 12 (ABCA12).